A 420-amino-acid polypeptide reads, in one-letter code: Isocitrate dehydrogenase [NADP] (420 aa).

Residues 75-77 (TIT) and R82 contribute to the NADP(+) site. T77 contacts substrate. Substrate is bound by residues 94–100 (SPNGTIR), R109, and R132. D252 contacts Mn(2+). Residue K260 participates in NADP(+) binding. D275 provides a ligand contact to Mn(2+). NADP(+) is bound by residues 310–315 (GTVTRH) and N328.

The protein belongs to the isocitrate and isopropylmalate dehydrogenases family. Mg(2+) is required as a cofactor. It depends on Mn(2+) as a cofactor.

The catalysed reaction is D-threo-isocitrate + NADP(+) = 2-oxoglutarate + CO2 + NADPH. May function in the production of NADPH for fatty acid and sterol synthesis. This is Isocitrate dehydrogenase [NADP] (IDP3) from Saccharomyces cerevisiae (strain ATCC 204508 / S288c) (Baker's yeast).